Consider the following 263-residue polypeptide: MLQDVMKKSKKIVIKIGSNTLSNVDGTINHDFIEALCQQVAFLVGEGKQVVIVTSGARIAGISRTNKWSRKEDMNYKQALCAIGQVELMSAYNSHFSHHGIYIGQLLLTREDFFDKTRNLNIRNTLFTLVDEGIVPIINENDTVSVEQIKIGDNDTLAAYTATLWNADLLILLSDIDGIYNKNPKEYEDAELLEQVQNIDDMLKEIEVGETNSFGTGGIETKIEAARIVNRYNIPMILGNGKNKEILMKLYQNEAKATIFFRE.

Lys15 is an ATP binding site. The substrate site is built by Ser55, Asp142, and Asn154. Residues 174-175 (SD) and 216-222 (TGGIETK) each bind ATP.

This sequence belongs to the glutamate 5-kinase family.

The protein resides in the cytoplasm. It carries out the reaction L-glutamate + ATP = L-glutamyl 5-phosphate + ADP. It functions in the pathway amino-acid biosynthesis; L-proline biosynthesis; L-glutamate 5-semialdehyde from L-glutamate: step 1/2. Its function is as follows. Catalyzes the transfer of a phosphate group to glutamate to form L-glutamate 5-phosphate. The sequence is that of Glutamate 5-kinase from Alkaliphilus oremlandii (strain OhILAs) (Clostridium oremlandii (strain OhILAs)).